Here is a 417-residue protein sequence, read N- to C-terminus: Dibenzothiophene monooxygenase (417 aa).

The segment at 18–124 is helical N-terminus; it reads NDPVAVARGL…HLYTQIAQNN (107 aa). FMN is bound by residues Tyr-96, 129–134, 159–163, Arg-282, 369–370, and His-391; these read NASSEN, KHFCS, and AR. Residues 125-233 form a central beta-barrel N-terminus region; that stretch reads WWTGNASSEN…KVEPDEVLGA (109 aa). Residues 131–142 form a lid loop region; sequence SSENNSHVLDWK. The helical C-terminus stretch occupies residues 234-417; sequence PNAFVLAFIQ…GQYPIPGFTS (184 aa).

This sequence belongs to the DszC flavin monooxygenase family. In terms of assembly, homotetramer formed by a dimer of dimers; FMN binds between monomers of the homodimer.

The protein localises to the cytoplasm. It carries out the reaction dibenzothiophene + 2 FMNH2 + 2 O2 = dibenzothiophene 5,5-dioxide + 2 FMN + 2 H2O + 2 H(+). The catalysed reaction is dibenzothiophene + FMNH2 + O2 = dibenzothiophene 5-oxide + FMN + H2O + H(+). The enzyme catalyses dibenzothiophene 5-oxide + FMNH2 + O2 = dibenzothiophene 5,5-dioxide + FMN + H2O + H(+). Its pathway is sulfur metabolism; dibenzothiophene degradation. With respect to regulation, DBT degradation completely inhibited by Cu(2+), Mn(2+), p-chloromercuribenzoic acid, 2,2-bipyridyl, 1,10-phenanthroline, and strongly inhibited by Zn(2+), 5,5'- Dithiobis(2-nitrobenzoic acid) and 8-quinolinol. Its function is as follows. Catalyzes the first step of the '4S' desulfurization pathway that removes covalently bound sulfur from dibenzothiophene (DBT) without breaking carbon-carbon bonds. Sulfur dioxygenase which converts DBT to DBT-sulfone (DBTO2 or DBT 5,5-dioxide) in a stepwise manner. Also acts on thioxanthen-9-one and 4,6-dimethyl DBT and 2,8-dimethyl DBT. In Rhodococcus erythropolis (Arthrobacter picolinophilus), this protein is Dibenzothiophene monooxygenase.